A 397-amino-acid polypeptide reads, in one-letter code: MTTLLNPYFGEFGGMYVPQILMPALNQLEEAFVSAQKDPEFQAQFADLLKNYAGRPTALTKCQNITAGTRTTLYLKREDLLHGGAHKTNQVLGQALLAKRMGKSEIIAETGAGQHGVASALASALLGLKCRIYMGAKDVERQSPNVFRMRLMGAEVIPVHSGSATLKDACNEALRDWSGSYETAHYMLGTAAGPHPYPTIVREFQRMIGEETKAQILDKEGRLPDAVIACVGGGSNAIGMFADFINDTSVGLIGVEPGGHGIETGKHGAPLKHGRVGIYFGMKAPMMQTADGQIEESYSISAGLDFPSVGPQHAYLNSIGRADYVSITDDEALEAFKTLCRHEGIIPALESSHALAHALKMMREQPEKEQLLVVNLSGRGDKDIFTVHDILKARGEI.

N6-(pyridoxal phosphate)lysine is present on Lys-87.

Belongs to the TrpB family. In terms of assembly, tetramer of two alpha and two beta chains. Pyridoxal 5'-phosphate is required as a cofactor.

It catalyses the reaction (1S,2R)-1-C-(indol-3-yl)glycerol 3-phosphate + L-serine = D-glyceraldehyde 3-phosphate + L-tryptophan + H2O. The protein operates within amino-acid biosynthesis; L-tryptophan biosynthesis; L-tryptophan from chorismate: step 5/5. Its function is as follows. The beta subunit is responsible for the synthesis of L-tryptophan from indole and L-serine. This is Tryptophan synthase beta chain from Salmonella choleraesuis (strain SC-B67).